The sequence spans 1159 residues: WASH complex subunit 5 (1159 aa).

Position 917 is a phosphoserine (S917).

The protein belongs to the strumpellin family. In terms of assembly, component of the WASH core complex also described as WASH regulatory complex (SHRC) composed of WASH (WASHC1, WASH2P or WASH3P), WASHC2 (WASHC2A or WASHC2C), WASHC3, WASHC4 and WASHC5. The WASH core complex associates via WASHC2 with the F-actin-capping protein dimer (formed by CAPZA1, CAPZA2 or CAPZA3 and CAPZB) in a transient or substoichiometric manner which was initially described as WASH complex. Interacts with VCP, PI4K2A. Expressed ubiquitously.

It localises to the cytoplasm. The protein localises to the cytosol. The protein resides in the endoplasmic reticulum. Its subcellular location is the early endosome. Functionally, acts as a component of the WASH core complex that functions as a nucleation-promoting factor (NPF) at the surface of endosomes, where it recruits and activates the Arp2/3 complex to induce actin polymerization, playing a key role in the fission of tubules that serve as transport intermediates during endosome sorting. May be involved in axonal outgrowth. Involved in cellular localization of ADRB2. Involved in cellular trafficking of BLOC-1 complex cargos such as ATP7A and VAMP7. This Homo sapiens (Human) protein is WASH complex subunit 5.